We begin with the raw amino-acid sequence, 80 residues long: Pre-core protein X (80 aa).

The propeptide occupies 2–32; it reads ALTCRLRFPVPGFRGRMHRRRGMAGHGLTGG. Residues 18 to 45 are disordered; that stretch reads MHRRRGMAGHGLTGGMRRAHHRRRRASH. The span at 34–45 shows a compositional bias: basic residues; sequence RRAHHRRRRASH. A propeptide spanning residues 52–80 is cleaved from the precursor; the sequence is ILPLLIPLIAAAIGAVPGIASVALQAQRH.

This sequence belongs to the adenoviridae core protein X family. As to quaternary structure, interacts with the core-capsid bridging protein; this interaction bridges the virus core to the capsid. Post-translationally, cleaved by the viral protease during virion maturation to form the mature protein.

Its subcellular location is the host nucleus. It is found in the host nucleolus. It localises to the virion. Interacts with the viral DNA and aids in tightly condensing it within the capsid. Cleavage of pre-core protein X may serve to partially relax this structure within the mature virion prior to its entry into the nucleus. The chain is Pre-core protein X from Human adenovirus C serotype 2 (HAdV-2).